A 273-amino-acid polypeptide reads, in one-letter code: Holocytochrome c-type synthase (273 aa).

Residues 1-18 (MGLSASSPAATAQSAAEP) show a composition bias toward low complexity. The disordered stretch occupies residues 1–39 (MGLSASSPAATAQSAAEPSKQHQVASPPSECPMHQEKMR). 2 HRM repeats span residues 30–35 (ECPMHQ) and 40–45 (GCPMHM).

It belongs to the cytochrome c-type heme lyase family.

It is found in the mitochondrion inner membrane. The catalysed reaction is holo-[cytochrome c] = apo-[cytochrome c] + heme b. Its function is as follows. Lyase that catalyzes the covalent linking of the heme group to the cytochrome C apoprotein to produce the mature functional cytochrome. In Gallus gallus (Chicken), this protein is Holocytochrome c-type synthase (HCCS).